Reading from the N-terminus, the 192-residue chain is A-type ATP synthase subunit E (192 aa).

The protein belongs to the V-ATPase E subunit family. In terms of assembly, has multiple subunits with at least A(3), B(3), C, D, E, F, H, I and proteolipid K(x).

The protein localises to the cell membrane. In terms of biological role, component of the A-type ATP synthase that produces ATP from ADP in the presence of a proton gradient across the membrane. In Methanocorpusculum labreanum (strain ATCC 43576 / DSM 4855 / Z), this protein is A-type ATP synthase subunit E.